The chain runs to 322 residues: Chromoplast-specific carotenoid-associated protein, chromoplastic (322 aa).

Residues methionine 1–arginine 58 constitute a chromoplast transit peptide. The interval glycine 67–glutamate 88 is disordered.

It belongs to the PAP/fibrillin family. In terms of tissue distribution, expressed in corollas. Not detected in fruits, stems, leaves, and roots.

The protein resides in the plastid. It localises to the chromoplast. Functionally, may be involved in carotenoid sequestration within chromoplasts. This is Chromoplast-specific carotenoid-associated protein, chromoplastic (CHRC) from Cucumis sativus (Cucumber).